A 292-amino-acid chain; its full sequence is Probable endonuclease 4 (292 aa).

Zn(2+)-binding residues include His69, His109, Glu145, Asp179, His182, His216, Asp229, His231, and Glu261.

This sequence belongs to the AP endonuclease 2 family. It depends on Zn(2+) as a cofactor.

The enzyme catalyses Endonucleolytic cleavage to 5'-phosphooligonucleotide end-products.. Endonuclease IV plays a role in DNA repair. It cleaves phosphodiester bonds at apurinic or apyrimidinic (AP) sites, generating a 3'-hydroxyl group and a 5'-terminal sugar phosphate. The polypeptide is Probable endonuclease 4 (Desulfotalea psychrophila (strain LSv54 / DSM 12343)).